The sequence spans 143 residues: Transcriptional regulator MraZ (143 aa).

SpoVT-AbrB domains lie at 5 to 47 and 76 to 119; these read EYEH…PRSV and AADM…APRR.

This sequence belongs to the MraZ family. In terms of assembly, forms oligomers.

It is found in the cytoplasm. The protein resides in the nucleoid. The sequence is that of Transcriptional regulator MraZ from Roseiflexus sp. (strain RS-1).